The primary structure comprises 145 residues: Protein X (145 aa).

Residues proline 68 to phenylalanine 117 are mitochondrial targeting sequence.

Belongs to the orthohepadnavirus protein X family. As to quaternary structure, may form homodimer. May interact with host CEBPA, CFLAR, CREB1, DDB1, E4F1, HBXIP, HSPD1/HSP60, NFKBIA, POLR2E and SMAD4. Interacts with host SMC5-SMC6 complex and induces its degradation. Interacts with host TRPC4AP; leading to prevent ubiquitination of TRPC4AP. Interacts with host PLSCR1; this interaction promotes ubiquitination and degradation of HBx and impairs HBx-mediated cell proliferation. Post-translationally, a fraction may be phosphorylated in insect cells and HepG2 cells, a human hepatoblastoma cell line. Phosphorylated in vitro by host protein kinase C or mitogen-activated protein kinase. N-acetylated in insect cells.

The protein localises to the host cytoplasm. It localises to the host nucleus. Its subcellular location is the host mitochondrion. In terms of biological role, multifunctional protein that plays a role in silencing host antiviral defenses and promoting viral transcription. Does not seem to be essential for HBV infection. May be directly involved in development of cirrhosis and liver cancer (hepatocellular carcinoma). Most of cytosolic activities involve modulation of cytosolic calcium. The effect on apoptosis is controversial depending on the cell types in which the studies have been conducted. May induce apoptosis by localizing in mitochondria and causing loss of mitochondrial membrane potential. May also modulate apoptosis by binding host CFLAR, a key regulator of the death-inducing signaling complex (DISC). Promotes viral transcription by using the host E3 ubiquitin ligase DDB1 to target the SMC5-SMC6 complex to proteasomal degradation. This host complex would otherwise bind to viral episomal DNA, and prevents its transcription. Moderately stimulates transcription of many different viral and cellular transcription elements. Promoters and enhancers stimulated by HBx contain DNA binding sites for NF-kappa-B, AP-1, AP-2, c-EBP, ATF/CREB, or the calcium-activated factor NF-AT. The polypeptide is Protein X (Homo sapiens (Human)).